Here is a 258-residue protein sequence, read N- to C-terminus: Phosphate import ATP-binding protein PstB (258 aa).

The ABC transporter domain maps to 5-247; the sequence is IDISGLSAFY…ERIFSNPSVQ (243 aa). An ATP-binding site is contributed by 37–44; the sequence is GPSGCGKS.

This sequence belongs to the ABC transporter superfamily. Phosphate importer (TC 3.A.1.7) family. The complex is composed of two ATP-binding proteins (PstB), two transmembrane proteins (PstC and PstA) and a solute-binding protein (PstS).

Its subcellular location is the cell membrane. The catalysed reaction is phosphate(out) + ATP + H2O = ADP + 2 phosphate(in) + H(+). Its function is as follows. Part of the ABC transporter complex PstSACB involved in phosphate import. Responsible for energy coupling to the transport system. This chain is Phosphate import ATP-binding protein PstB, found in Streptomyces griseus.